A 742-amino-acid polypeptide reads, in one-letter code: Clamp-binding protein CrfC (742 aa).

A clamp-binding consensus region spans residues 41 to 45 (QLALP). The region spanning 66 to 402 (SRLEMVLAIV…LWEDSLFAQP (337 aa)) is the Dynamin-type G domain. Positions 76–83 (GTMKAGKS) are G1 motif. The G2 motif stretch occupies residues 102–104 (MTA). A G3 motif region spans residues 236 to 239 (DTPG). A G4 motif region spans residues 297 to 300 (NKFD). Residues 331–334 (FPVS) form a G5 motif region. Positions 440–472 (RAHGLNVACEQLRQNIHQVEESLQLLQLNQAQV) form a coiled coil.

It belongs to the TRAFAC class dynamin-like GTPase superfamily. Dynamin/Fzo/YdjA family. As to quaternary structure, forms homooligomers. Binds to the beta sliding clamp processivity factor (DnaN) in the presence and absence of DNA, may bind to the clamp itself as homodimers or trimers. Homooligomers may be able to bind more than 1 clamp complex.

The protein localises to the cytoplasm. Its function is as follows. Important for the colocalization of sister nascent DNA strands after replication fork passage during DNA replication, and for positioning and subsequent partitioning of sister chromosomes. Does not have GTPase activity on its own. The chain is Clamp-binding protein CrfC (crfC) from Escherichia coli.